A 415-amino-acid chain; its full sequence is Light-independent protochlorophyllide reductase subunit N (415 aa).

Residues C16, C41, and C98 each coordinate [4Fe-4S] cluster.

It belongs to the BchN/ChlN family. Protochlorophyllide reductase is composed of three subunits; BchL, BchN and BchB. Forms a heterotetramer of two BchB and two BchN subunits. [4Fe-4S] cluster is required as a cofactor.

It carries out the reaction chlorophyllide a + oxidized 2[4Fe-4S]-[ferredoxin] + 2 ADP + 2 phosphate = protochlorophyllide a + reduced 2[4Fe-4S]-[ferredoxin] + 2 ATP + 2 H2O. Its pathway is porphyrin-containing compound metabolism; bacteriochlorophyll biosynthesis (light-independent). In terms of biological role, component of the dark-operative protochlorophyllide reductase (DPOR) that uses Mg-ATP and reduced ferredoxin to reduce ring D of protochlorophyllide (Pchlide) to form chlorophyllide a (Chlide). This reaction is light-independent. The NB-protein (BchN-BchB) is the catalytic component of the complex. This chain is Light-independent protochlorophyllide reductase subunit N, found in Roseiflexus sp. (strain RS-1).